Reading from the N-terminus, the 562-residue chain is Formate--tetrahydrofolate ligase (562 aa).

Threonine 77–serine 84 lines the ATP pocket.

It belongs to the formate--tetrahydrofolate ligase family.

The enzyme catalyses (6S)-5,6,7,8-tetrahydrofolate + formate + ATP = (6R)-10-formyltetrahydrofolate + ADP + phosphate. It functions in the pathway one-carbon metabolism; tetrahydrofolate interconversion. The protein is Formate--tetrahydrofolate ligase of Corynebacterium jeikeium (strain K411).